The sequence spans 476 residues: Bridging integrator 2 (476 aa).

Residues 26-242 enclose the BAR domain; that stretch reads VLQKLGKTVE…MGKLDKQHSS (217 aa). 2 disordered regions span residues 269–369 and 395–476; these read YPCP…TEGA and GAAP…LTPL. Polar residues predominate over residues 279-292; it reads EPSSGAEQTPTSPR. Positions 310-324 are enriched in pro residues; it reads PAEPGAPMPGPPPAS. Positions 325-339 are enriched in low complexity; it reads PTSVRSASESESECS. The segment covering 340–353 has biased composition (basic and acidic residues); sequence GESREIDLSPKEME. A compositionally biased stretch (polar residues) spans 461–476; that stretch reads VSCNPPQDPSESLTPL.

It localises to the cytoplasm. The sequence is that of Bridging integrator 2 (BIN2) from Gallus gallus (Chicken).